Reading from the N-terminus, the 180-residue chain is DNA-directed RNA polymerase subunit Rpo7 (180 aa).

The S1 motif domain maps to 82-165 (QEVVEGEVLQ…RLPRIALTMR (84 aa)).

The protein belongs to the eukaryotic RPB7/RPC8 RNA polymerase subunit family. As to quaternary structure, part of the 13-subunit RNA polymerase complex. Forms a stalk with Rpo4 that extends from the main structure.

It localises to the cytoplasm. It catalyses the reaction RNA(n) + a ribonucleoside 5'-triphosphate = RNA(n+1) + diphosphate. Functionally, DNA-dependent RNA polymerase (RNAP) catalyzes the transcription of DNA into RNA using the four ribonucleoside triphosphates as substrates. In Saccharolobus solfataricus (strain ATCC 35092 / DSM 1617 / JCM 11322 / P2) (Sulfolobus solfataricus), this protein is DNA-directed RNA polymerase subunit Rpo7.